Consider the following 366-residue polypeptide: Phospho-N-acetylmuramoyl-pentapeptide-transferase (366 aa).

10 helical membrane passes run 27–47, 71–91, 93–113, 134–154, 174–194, 205–225, 245–265, 268–288, 297–317, and 343–363; these read AALF…ISSL, TPTM…LLWA, LSSI…AIGF, LGIE…AAQS, LMLN…VGAG, GLAI…AYLA, LAVI…FNAP, AIFM…TVAV, VIIG…VFWF, and QVVI…LSTL.

The protein belongs to the glycosyltransferase 4 family. MraY subfamily. Requires Mg(2+) as cofactor.

The protein resides in the cell inner membrane. It carries out the reaction UDP-N-acetyl-alpha-D-muramoyl-L-alanyl-gamma-D-glutamyl-meso-2,6-diaminopimeloyl-D-alanyl-D-alanine + di-trans,octa-cis-undecaprenyl phosphate = di-trans,octa-cis-undecaprenyl diphospho-N-acetyl-alpha-D-muramoyl-L-alanyl-D-glutamyl-meso-2,6-diaminopimeloyl-D-alanyl-D-alanine + UMP. The protein operates within cell wall biogenesis; peptidoglycan biosynthesis. In terms of biological role, catalyzes the initial step of the lipid cycle reactions in the biosynthesis of the cell wall peptidoglycan: transfers peptidoglycan precursor phospho-MurNAc-pentapeptide from UDP-MurNAc-pentapeptide onto the lipid carrier undecaprenyl phosphate, yielding undecaprenyl-pyrophosphoryl-MurNAc-pentapeptide, known as lipid I. This chain is Phospho-N-acetylmuramoyl-pentapeptide-transferase, found in Sinorhizobium fredii (strain NBRC 101917 / NGR234).